Consider the following 426-residue polypeptide: Dihydroorotase (426 aa).

Positions 61 and 63 each coordinate Zn(2+). Substrate is bound by residues 63 to 65 and N95; that span reads HCR. Residues E146, H180, H229, and D297 each contribute to the Zn(2+) site. D297 is an active-site residue. H301 provides a ligand contact to substrate.

It belongs to the metallo-dependent hydrolases superfamily. DHOase family. Class I DHOase subfamily. Zn(2+) is required as a cofactor.

It catalyses the reaction (S)-dihydroorotate + H2O = N-carbamoyl-L-aspartate + H(+). It functions in the pathway pyrimidine metabolism; UMP biosynthesis via de novo pathway; (S)-dihydroorotate from bicarbonate: step 3/3. Its function is as follows. Catalyzes the reversible cyclization of carbamoyl aspartate to dihydroorotate. This Methanopyrus kandleri (strain AV19 / DSM 6324 / JCM 9639 / NBRC 100938) protein is Dihydroorotase.